A 278-amino-acid chain; its full sequence is DNA oxidative demethylase ALKBH2 (278 aa).

A disordered region spans residues 1–49 (MDRFLVKGAVGSLKRRMEQEQTGGGPAGLAEEEGNSKKNPRRAAPGNGV). A PCNA-binding motif is present at residues 3–7 (RFLVK). Residues 101 to 103 (FGK) and 121 to 123 (YTF) contribute to the substrate site. The 106-residue stretch at 151–256 (TFNFVLINRY…RVNLTFRKIL (106 aa)) folds into the Fe2OG dioxygenase domain. Residues asparagine 158, tyrosine 160, and histidine 170 each contribute to the 2-oxoglutarate site. The Fe cation site is built by histidine 170 and aspartate 172. Residue aspartate 173 participates in substrate binding. Positions 235, 247, 251, and 253 each coordinate 2-oxoglutarate. Histidine 235 contributes to the Fe cation binding site.

This sequence belongs to the alkB family. Interacts with PCNA homotrimer; this interaction is enhanced during the S-phase of the cell cycle. Interacts with nucleolar proteins NCL, UBTF and NPM1. Interacts with XRCC5-XRCC6 heterodimer. The cofactor is Fe(2+).

The protein resides in the nucleus. The protein localises to the nucleolus. Its subcellular location is the nucleoplasm. The enzyme catalyses a methylated nucleobase within DNA + 2-oxoglutarate + O2 = a nucleobase within DNA + formaldehyde + succinate + CO2. The catalysed reaction is an N(1)-methyl-2'-deoxyadenosine in double-stranded DNA + 2-oxoglutarate + O2 = a 2'-deoxyadenosine in double-stranded DNA + formaldehyde + succinate + CO2 + H(+). It catalyses the reaction an N(1)-methyl-2'-deoxyadenosine in single-stranded DNA + 2-oxoglutarate + O2 = a 2'-deoxyadenosine in single-stranded DNA + formaldehyde + succinate + CO2 + H(+). It carries out the reaction an N(3)-methyl-2'-deoxycytidine in double-stranded DNA + 2-oxoglutarate + O2 = a 2'-deoxycytidine in double-stranded DNA + formaldehyde + succinate + CO2 + H(+). The enzyme catalyses an N(3)-methyl-2'-deoxycytidine in single-stranded DNA + 2-oxoglutarate + O2 = a 2'-deoxycytidine in single-stranded DNA + formaldehyde + succinate + CO2 + H(+). The catalysed reaction is a 1,N(6)-etheno-2'-deoxyadenosine in double-stranded DNA + 2-oxoglutarate + O2 + H2O = a 2'-deoxyadenosine in double-stranded DNA + glyoxal + succinate + CO2. It catalyses the reaction a 1,N(6)-etheno-2'-deoxyadenosine in single-stranded DNA + 2-oxoglutarate + O2 + H2O = a 2'-deoxyadenosine in single-stranded DNA + glyoxal + succinate + CO2. It carries out the reaction a 3,N(4)-etheno-2'-deoxycytidine in double-stranded DNA + 2-oxoglutarate + O2 + H2O = a 2'-deoxycytidine in double-stranded DNA + glyoxal + succinate + CO2. The enzyme catalyses a 3,N(4)-etheno-2'-deoxycytidine in single-stranded DNA + 2-oxoglutarate + O2 + H2O = a 2'-deoxycytidine in single-stranded DNA + glyoxal + succinate + CO2. The catalysed reaction is a 1,N(2)-etheno-2'-deoxyguanosine in double-stranded DNA + 2-oxoglutarate + O2 + H2O = a 2'-deoxyguanosine in double-stranded DNA + glyoxal + succinate + CO2. Activated by ascorbate and magnesium ions. In terms of biological role, dioxygenase that repairs alkylated nucleic acid bases by direct reversal oxidative dealkylation. Can process both double-stranded (ds) and single-stranded (ss) DNA substrates, with a strong preference for dsDNA. Uses molecular oxygen, 2-oxoglutarate and iron as cofactors to oxidize the alkyl groups that are subsequently released as aldehydes, regenerating the undamaged bases. Probes the base pair stability, locates a weakened base pair and flips the damaged base to accommodate the lesion in its active site for efficient catalysis. Repairs monoalkylated bases, specifically N1-methyladenine and N3-methylcytosine, as well as higher order alkyl adducts such as bases modified with exocyclic bridged adducts known as etheno adducts including 1,N6-ethenoadenine, 3,N4-ethenocytosine and 1,N2-ethenoguanine. Acts as a gatekeeper of genomic integrity under alkylation stress. Efficiently repairs alkylated lesions in ribosomal DNA (rDNA). These lesions can cause ss- and dsDNA strand breaks that severely impair rDNA transcription. In a response mechanism to DNA damage, associates with PCNA at replication forks to repair alkylated adducts prior to replication. The polypeptide is DNA oxidative demethylase ALKBH2 (ALKBH2) (Bos taurus (Bovine)).